Reading from the N-terminus, the 254-residue chain is uncharacterized protein (254 aa).

Positions 1–22 (MKRLKKIVLCISFLFLTIFIGG) are cleaved as a signal peptide. C23 carries the N-palmitoyl cysteine lipid modification. The S-diacylglycerol cysteine moiety is linked to residue C23.

This sequence belongs to the staphylococcal tandem lipoprotein family.

It localises to the cell membrane. This is an uncharacterized protein from Staphylococcus aureus (strain MSSA476).